The primary structure comprises 348 residues: Dihydroorotase (348 aa).

2 residues coordinate Zn(2+): H17 and H19. Substrate-binding positions include 19–21 (HLR) and N45. Zn(2+) contacts are provided by K103, H140, and H178. K103 carries the N6-carboxylysine modification. H140 serves as a coordination point for substrate. L223 is a binding site for substrate. D251 provides a ligand contact to Zn(2+). Residue D251 is part of the active site. Substrate-binding residues include H255 and A267.

It belongs to the metallo-dependent hydrolases superfamily. DHOase family. Class II DHOase subfamily. As to quaternary structure, homodimer. Zn(2+) serves as cofactor.

The catalysed reaction is (S)-dihydroorotate + H2O = N-carbamoyl-L-aspartate + H(+). Its pathway is pyrimidine metabolism; UMP biosynthesis via de novo pathway; (S)-dihydroorotate from bicarbonate: step 3/3. Functionally, catalyzes the reversible cyclization of carbamoyl aspartate to dihydroorotate. This Edwardsiella ictaluri (strain 93-146) protein is Dihydroorotase.